A 300-amino-acid chain; its full sequence is Ornithine carbamoyltransferase (300 aa).

Residues 49 to 52 (STRT), Gln-76, Arg-100, and 127 to 130 (HPCQ) contribute to the carbamoyl phosphate site. L-ornithine-binding positions include Asn-158, Asp-218, and 222-223 (SM). Carbamoyl phosphate-binding positions include 258-259 (CL) and Arg-286.

It belongs to the aspartate/ornithine carbamoyltransferase superfamily. OTCase family.

It is found in the cytoplasm. It catalyses the reaction carbamoyl phosphate + L-ornithine = L-citrulline + phosphate + H(+). The protein operates within amino-acid biosynthesis; L-arginine biosynthesis; L-arginine from L-ornithine and carbamoyl phosphate: step 1/3. In terms of biological role, reversibly catalyzes the transfer of the carbamoyl group from carbamoyl phosphate (CP) to the N(epsilon) atom of ornithine (ORN) to produce L-citrulline. The protein is Ornithine carbamoyltransferase of Oleidesulfovibrio alaskensis (strain ATCC BAA-1058 / DSM 17464 / G20) (Desulfovibrio alaskensis).